Here is a 272-residue protein sequence, read N- to C-terminus: uncharacterized protein (272 aa).

Catalysis depends on residues Asp71 and Glu163.

It belongs to the glycosyl hydrolase 25 family.

This is an uncharacterized protein from Escherichia coli O6:H1 (strain CFT073 / ATCC 700928 / UPEC).